A 602-amino-acid chain; its full sequence is MSATSEYPVQRWFGMEVLDHSQGAIDWSRMRSGAPLLAQHDRWSTKGQIGVVEEAWLDDDRRMRVRVRFSKSKEAEEIWRDVVDGIRRNVSCGYLPQEMVLEKREGDLEHFRVTRWQPFEISIVSVAADPTVGIGRSTDQTTSTITIRGSEMDEQENTTTTAQQPGKSVNGEHQEPTTRTFAEPKDGALEKERQRSADILALGERFSQRDLAMQAVTQGYSVDSFRRQLLDAQAPQPIDTNPGDNQRDLPQFNHQRPGQNVEKLGITERDMSQYSLLRAINAMATGDYKDAGFEREVSNAIADASGTEARGLFMPHEALFGGMLRQQEKKTPSKGGILVDTDMRTDMYTEILKNRTVLGALGATVLSGLQGDVDIPKQLSEGNFYWLDEDGEAPQSDIDFGTIGLSPKTISGAIAITRRLRKQASMSIENLVRNELLSGVAVTTDKGYLYGTGEDNQPLGLMYQTGIPGLTYADKFGWDEAVDMETQVGQANVSANGMGYLTSVGQRGAGKKTFVAAGTGERLWHNNEVNGYRAMASNQVNADTWVFGDWAQVLIALWGVVDLKVDQATKAASDGLILRVFQDVDVNARRKEAFSIARKSVA.

Disordered stretches follow at residues 149–191 (GSEM…ALEK) and 234–261 (APQPIDTNPGDNQRDLPQFNHQRPGQNV). Polar residues predominate over residues 157 to 167 (NTTTTAQQPGK). The span at 170 to 191 (NGEHQEPTTRTFAEPKDGALEK) shows a compositional bias: basic and acidic residues.

This sequence belongs to the HK97 phage major capsid protein family.

The protein resides in the virion. Its function is as follows. Assembles to form an icosahedral capsid. This chain is Major capsid protein, found in Vreelandella aquamarina (Bacteriophage phiHAP-1).